The primary structure comprises 339 residues: Deubiquitinase and deneddylase Dub2 (339 aa).

A helical transmembrane segment spans residues 36-56; the sequence is IIIALFLIVISCGLILCAYTF. Residues H203, D220, and C282 contribute to the active site.

Belongs to the peptidase C48 family.

It localises to the secreted. It is found in the host cell. Its subcellular location is the membrane. Functionally, effector proteins function to alter host cell physiology and promote bacterial survival in host tissues. This protease possesses deubiquitinating and deneddylating activities. The sequence is that of Deubiquitinase and deneddylase Dub2 (cdu2) from Chlamydia trachomatis serovar A (strain ATCC VR-571B / DSM 19440 / HAR-13).